Reading from the N-terminus, the 464-residue chain is Glutamate decarboxylase (464 aa).

At K274 the chain carries N6-(pyridoxal phosphate)lysine.

It belongs to the group II decarboxylase family. Pyridoxal 5'-phosphate serves as cofactor.

It carries out the reaction L-glutamate + H(+) = 4-aminobutanoate + CO2. Its function is as follows. Catalyzes the pyridoxal-dependent decarboxylation of glutamate to produce 4-aminobutanoate. Has weak activity with aspartate, but cannot complement an E.coli panD deletion mutant. This chain is Glutamate decarboxylase, found in Aliivibrio fischeri (strain ATCC 700601 / ES114) (Vibrio fischeri).